The sequence spans 355 residues: Uroporphyrinogen decarboxylase (355 aa).

Substrate-binding positions include 27–31 (RQAGR), aspartate 77, tyrosine 154, threonine 209, and histidine 328.

It belongs to the uroporphyrinogen decarboxylase family. In terms of assembly, homodimer.

The protein localises to the cytoplasm. The enzyme catalyses uroporphyrinogen III + 4 H(+) = coproporphyrinogen III + 4 CO2. It participates in porphyrin-containing compound metabolism; protoporphyrin-IX biosynthesis; coproporphyrinogen-III from 5-aminolevulinate: step 4/4. Its function is as follows. Catalyzes the decarboxylation of four acetate groups of uroporphyrinogen-III to yield coproporphyrinogen-III. The protein is Uroporphyrinogen decarboxylase of Colwellia psychrerythraea (strain 34H / ATCC BAA-681) (Vibrio psychroerythus).